We begin with the raw amino-acid sequence, 166 residues long: Putative tRNA (cytidine(34)-2'-O)-methyltransferase (166 aa).

Residues Leu83, Gly109, Ile130, and Ser138 each coordinate S-adenosyl-L-methionine.

This sequence belongs to the class IV-like SAM-binding methyltransferase superfamily. RNA methyltransferase TrmH family. TrmL subfamily.

The protein resides in the cytoplasm. It carries out the reaction cytidine(34) in tRNA + S-adenosyl-L-methionine = 2'-O-methylcytidine(34) in tRNA + S-adenosyl-L-homocysteine + H(+). The enzyme catalyses 5-carboxymethylaminomethyluridine(34) in tRNA(Leu) + S-adenosyl-L-methionine = 5-carboxymethylaminomethyl-2'-O-methyluridine(34) in tRNA(Leu) + S-adenosyl-L-homocysteine + H(+). Its function is as follows. Could methylate the ribose at the nucleotide 34 wobble position in tRNA. The protein is Putative tRNA (cytidine(34)-2'-O)-methyltransferase of Mycoplasma pneumoniae (strain ATCC 29342 / M129 / Subtype 1) (Mycoplasmoides pneumoniae).